Here is a 151-residue protein sequence, read N- to C-terminus: Protein-export protein SecB (151 aa).

It belongs to the SecB family. Homotetramer, a dimer of dimers. One homotetramer interacts with 1 SecA dimer.

It is found in the cytoplasm. In terms of biological role, one of the proteins required for the normal export of preproteins out of the cell cytoplasm. It is a molecular chaperone that binds to a subset of precursor proteins, maintaining them in a translocation-competent state. It also specifically binds to its receptor SecA. The sequence is that of Protein-export protein SecB from Acinetobacter baylyi (strain ATCC 33305 / BD413 / ADP1).